Consider the following 192-residue polypeptide: UPF0312 protein Avin_03250 (192 aa).

The first 23 residues, 1-23 (MLKKTLAALALGSALLGAGQAMA), serve as a signal peptide directing secretion.

The protein belongs to the UPF0312 family. Type 1 subfamily.

The protein resides in the periplasm. The polypeptide is UPF0312 protein Avin_03250 (Azotobacter vinelandii (strain DJ / ATCC BAA-1303)).